The following is a 383-amino-acid chain: Probable cell wall hydrolase LytN (383 aa).

An N-terminal signal peptide occupies residues 1 to 49; that stretch reads MFVYYCKECFIMNKQQSKVRYSIRKVSIGILSISIGMFLALGMSNKAYA. A LysM domain is found at 175–219; sequence QIYTVKKGDTLSAIALKYKTTVSNIQNTNNIANPNLIFIGQKLKV. A Peptidase C51 domain is found at 241 to 378; the sequence is NSSTLNYLKT…NYENDMIFIR (138 aa).

It is found in the secreted. In terms of biological role, probably involved in peptidoglycan hydrolysis. The polypeptide is Probable cell wall hydrolase LytN (lytN) (Staphylococcus aureus (strain NCTC 8325 / PS 47)).